A 441-amino-acid chain; its full sequence is Cysteine--tRNA ligase (441 aa).

Position 24 (Cys24) interacts with Zn(2+). The short motif at Pro26–Asn36 is the 'HIGH' region element. Residues Cys204, His230, and Glu234 each coordinate Zn(2+). The 'KMSKS' region signature appears at Lys262–Ser266. Lys265 contributes to the ATP binding site.

Belongs to the class-I aminoacyl-tRNA synthetase family. As to quaternary structure, monomer. It depends on Zn(2+) as a cofactor.

The protein localises to the cytoplasm. It carries out the reaction tRNA(Cys) + L-cysteine + ATP = L-cysteinyl-tRNA(Cys) + AMP + diphosphate. The protein is Cysteine--tRNA ligase of Mycoplasma capricolum subsp. capricolum (strain California kid / ATCC 27343 / NCTC 10154).